Here is a 520-residue protein sequence, read N- to C-terminus: Transcription factor MYB33 (520 aa).

The interval 1–24 (MSYTSTDSDHNESPAADDNGSDCR) is disordered. HTH myb-type domains follow at residues 29 to 81 (GHAL…ANHL) and 82 to 136 (RPNL…KRRQ). 2 consecutive DNA-binding regions (H-T-H motif) follow at residues 57-81 (WNAV…ANHL) and 109-132 (WARM…NTRI). Over residues 331–342 (SSSPPHSDLLDP) the composition is skewed to low complexity. Disordered stretches follow at residues 331 to 359 (SSSP…GEES) and 426 to 447 (EMST…RKPL).

Mostly expressed in stems, shoot apices, flowers and floral shoot tips, and, to a lower extent, in roots (e.g. root tips), seedlings, leaves and siliques.

The protein localises to the nucleus. Its function is as follows. Transcriptional activator of alpha-amylase expression that binds to 5'-CAACTGTC-3' motif in target gene promoter. Positive regulator of abscisic acid (ABA) responses leading to growth arrest during seed germination. In vegetative tissues, inhibits growth by reducing cell proliferation. Promotes the expression of aleurone-related genes (e.g. CP1, CP, GASA1, BXL1 and BXL2) in seeds. Together with MYB65 and MYB101, promotes the programmed cell death (PCD) the vacuolation of protein storage vacuoles (PSVs) in the aleurone layers during seed germination. Binds to a GARE site (GA-response element) in the LEAFY promoter, essential for its gibberellic acid (GA)-mediated induction. Together with MYB65, facilitates anther and tapetum development. The protein is Transcription factor MYB33 of Arabidopsis thaliana (Mouse-ear cress).